Reading from the N-terminus, the 473-residue chain is 3-isopropylmalate dehydratase large subunit (473 aa).

Positions 351, 414, and 417 each coordinate [4Fe-4S] cluster.

It belongs to the aconitase/IPM isomerase family. LeuC type 1 subfamily. In terms of assembly, heterodimer of LeuC and LeuD. [4Fe-4S] cluster is required as a cofactor.

The enzyme catalyses (2R,3S)-3-isopropylmalate = (2S)-2-isopropylmalate. Its pathway is amino-acid biosynthesis; L-leucine biosynthesis; L-leucine from 3-methyl-2-oxobutanoate: step 2/4. In terms of biological role, catalyzes the isomerization between 2-isopropylmalate and 3-isopropylmalate, via the formation of 2-isopropylmaleate. This is 3-isopropylmalate dehydratase large subunit from Acidovorax ebreus (strain TPSY) (Diaphorobacter sp. (strain TPSY)).